A 412-amino-acid polypeptide reads, in one-letter code: Alpha-1-antitrypsin 1-3 (412 aa).

The signal sequence occupies residues 1 to 24; sequence MTPSISWGLLLLAGLCCLVPSFLA. N-linked (GlcNAc...) asparagine glycans are attached at residues Asn64, Asn101, and Asn265. The interval 368 to 387 is RCL; sequence AVTVLLAVPYSMPPILRFDH.

This sequence belongs to the serpin family.

It localises to the secreted. Its function is as follows. Inhibitor of serine proteases. Can inhibit trypsin and chymotrypsin; relatively ineffective against elastase. The protein is Alpha-1-antitrypsin 1-3 (Serpina1c) of Mus musculus (Mouse).